Consider the following 1401-residue polypeptide: DNA-directed RNA polymerase subunit beta' (1401 aa).

4 residues coordinate Zn(2+): C70, C72, C85, and C88. Mg(2+) is bound by residues D460, D462, and D464. The Zn(2+) site is built by C808, C882, C889, and C892.

It belongs to the RNA polymerase beta' chain family. As to quaternary structure, the RNAP catalytic core consists of 2 alpha, 1 beta, 1 beta' and 1 omega subunit. When a sigma factor is associated with the core the holoenzyme is formed, which can initiate transcription. The cofactor is Mg(2+). Requires Zn(2+) as cofactor.

The catalysed reaction is RNA(n) + a ribonucleoside 5'-triphosphate = RNA(n+1) + diphosphate. In terms of biological role, DNA-dependent RNA polymerase catalyzes the transcription of DNA into RNA using the four ribonucleoside triphosphates as substrates. This Legionella pneumophila subsp. pneumophila (strain Philadelphia 1 / ATCC 33152 / DSM 7513) protein is DNA-directed RNA polymerase subunit beta'.